Reading from the N-terminus, the 356-residue chain is S-adenosylmethionine:tRNA ribosyltransferase-isomerase (356 aa).

The protein belongs to the QueA family. In terms of assembly, monomer.

Its subcellular location is the cytoplasm. The enzyme catalyses 7-aminomethyl-7-carbaguanosine(34) in tRNA + S-adenosyl-L-methionine = epoxyqueuosine(34) in tRNA + adenine + L-methionine + 2 H(+). Its pathway is tRNA modification; tRNA-queuosine biosynthesis. In terms of biological role, transfers and isomerizes the ribose moiety from AdoMet to the 7-aminomethyl group of 7-deazaguanine (preQ1-tRNA) to give epoxyqueuosine (oQ-tRNA). The chain is S-adenosylmethionine:tRNA ribosyltransferase-isomerase from Shigella boydii serotype 18 (strain CDC 3083-94 / BS512).